We begin with the raw amino-acid sequence, 231 residues long: Large ribosomal subunit protein uL1 (231 aa).

The protein belongs to the universal ribosomal protein uL1 family. As to quaternary structure, part of the 50S ribosomal subunit.

Binds directly to 23S rRNA. The L1 stalk is quite mobile in the ribosome, and is involved in E site tRNA release. Its function is as follows. Protein L1 is also a translational repressor protein, it controls the translation of the L11 operon by binding to its mRNA. The polypeptide is Large ribosomal subunit protein uL1 (Buchnera aphidicola subsp. Acyrthosiphon pisum (strain 5A)).